A 68-amino-acid polypeptide reads, in one-letter code: Large ribosomal subunit protein eL24 (68 aa).

The Zn(2+) site is built by C7, C10, C33, and C37. A C4-type zinc finger spans residues 7–37; the sequence is CSYCGREFEPGTGKMFVRNDGRVLFFCSSKC.

It belongs to the eukaryotic ribosomal protein eL24 family. In terms of assembly, part of the 50S ribosomal subunit. Forms a cluster with proteins L3 and L14. Zn(2+) serves as cofactor.

Its function is as follows. Binds to the 23S rRNA. The protein is Large ribosomal subunit protein eL24 of Thermococcus gammatolerans (strain DSM 15229 / JCM 11827 / EJ3).